The following is a 483-amino-acid chain: Glutamyl-tRNA(Gln) amidotransferase subunit A (483 aa).

Catalysis depends on charge relay system residues K76 and S151. S175 serves as the catalytic Acyl-ester intermediate.

This sequence belongs to the amidase family. GatA subfamily. In terms of assembly, heterotrimer of A, B and C subunits.

The enzyme catalyses L-glutamyl-tRNA(Gln) + L-glutamine + ATP + H2O = L-glutaminyl-tRNA(Gln) + L-glutamate + ADP + phosphate + H(+). In terms of biological role, allows the formation of correctly charged Gln-tRNA(Gln) through the transamidation of misacylated Glu-tRNA(Gln) in organisms which lack glutaminyl-tRNA synthetase. The reaction takes place in the presence of glutamine and ATP through an activated gamma-phospho-Glu-tRNA(Gln). The protein is Glutamyl-tRNA(Gln) amidotransferase subunit A of Azotobacter vinelandii (strain DJ / ATCC BAA-1303).